We begin with the raw amino-acid sequence, 544 residues long: Inosine-5'-monophosphate dehydrogenase (544 aa).

CBS domains are found at residues 132–192 and 194–250; these read FITD…PIKS and MTTE…PYAS. NAD(+) is bound by residues 288–290 and 338–340; these read DSS and GMG. Residues Gly-340 and Gly-342 each coordinate K(+). Residue Ser-343 coordinates IMP. Position 345 (Cys-345) interacts with K(+). Residue Cys-345 is the Thioimidate intermediate of the active site. IMP contacts are provided by residues 378 to 380, 401 to 402, and 425 to 429; these read DGG, GG, and YRGMG. Arg-458 (proton acceptor) is an active-site residue. Position 470 (Gln-470) interacts with IMP. Residues Glu-529, Gly-530, and Gly-531 each coordinate K(+).

The protein belongs to the IMPDH/GMPR family. In terms of assembly, homotetramer. K(+) serves as cofactor.

The protein resides in the cytoplasm. It carries out the reaction IMP + NAD(+) + H2O = XMP + NADH + H(+). The protein operates within purine metabolism; XMP biosynthesis via de novo pathway; XMP from IMP: step 1/1. Mycophenolic acid (MPA) is a non-competitive inhibitor that prevents formation of the closed enzyme conformation by binding to the same site as the amobile flap. In contrast, mizoribine monophosphate (MZP) is a competitive inhibitor that induces the closed conformation. MPA is a potent inhibitor of mammalian IMPDHs but a poor inhibitor of the bacterial enzymes. MZP is a more potent inhibitor of bacterial IMPDH. Functionally, catalyzes the conversion of inosine 5'-phosphate (IMP) to xanthosine 5'-phosphate (XMP), the first committed and rate-limiting step in the de novo synthesis of guanine nucleotides, and therefore plays an important role in the regulation of cell growth. In Cryptococcus neoformans var. neoformans serotype D (strain JEC21 / ATCC MYA-565) (Filobasidiella neoformans), this protein is Inosine-5'-monophosphate dehydrogenase.